Reading from the N-terminus, the 896-residue chain is Alanine--tRNA ligase (896 aa).

4 residues coordinate Zn(2+): His599, His603, Cys707, and His711.

Belongs to the class-II aminoacyl-tRNA synthetase family. It depends on Zn(2+) as a cofactor.

It is found in the cytoplasm. The enzyme catalyses tRNA(Ala) + L-alanine + ATP = L-alanyl-tRNA(Ala) + AMP + diphosphate. Functionally, catalyzes the attachment of alanine to tRNA(Ala) in a two-step reaction: alanine is first activated by ATP to form Ala-AMP and then transferred to the acceptor end of tRNA(Ala). Also edits incorrectly charged Ser-tRNA(Ala) and Gly-tRNA(Ala) via its editing domain. The protein is Alanine--tRNA ligase of Pyrobaculum calidifontis (strain DSM 21063 / JCM 11548 / VA1).